The sequence spans 685 residues: Translation initiation factor IF-2 (685 aa).

The region spanning 185–354 is the tr-type G domain; the sequence is KRPPVVTVMG…LLTAEMQELK (170 aa). Residues 194–201 are G1; it reads GHVDHGKT. 194–201 provides a ligand contact to GTP; that stretch reads GHVDHGKT. Positions 219–223 are G2; it reads GITQH. The tract at residues 240 to 243 is G3; sequence DTPG. Residues 240 to 244 and 294 to 297 contribute to the GTP site; these read DTPGH and NKMD. The interval 294-297 is G4; that stretch reads NKMD. The G5 stretch occupies residues 330–332; sequence SAH.

Belongs to the TRAFAC class translation factor GTPase superfamily. Classic translation factor GTPase family. IF-2 subfamily.

Its subcellular location is the cytoplasm. One of the essential components for the initiation of protein synthesis. Protects formylmethionyl-tRNA from spontaneous hydrolysis and promotes its binding to the 30S ribosomal subunits. Also involved in the hydrolysis of GTP during the formation of the 70S ribosomal complex. The protein is Translation initiation factor IF-2 of Clostridium tetani (strain Massachusetts / E88).